Consider the following 622-residue polypeptide: MPHLTDDDIYYWRQGTHTHSYERMGAHPNQRGTWFGVWAPNADRVEVTGDFNDWRFGADVLDRREGGLWEGYVRGAQPGDKYKYHLRAGGEWFDRTDPYAFRMEPPAQNTYEGLSALITDLDTYTWGDDAWMTTREGPSGIDGPLSIYEVHLGSWRHEEHGASLSYREVAEPLADHVQNLGFTHVEFLPLAEHPYYGSWGYQILGYYAPTFRYGDPEGLMHLIDTLHQRGIGVIMDWVPGHFATDPQGLTYFDGSHLFEYEDPLMREHPDWGTRVFDFGKNGVRNFLLSNALFWMDKYHVDGLRVDAVASMLYRDYSREGDWSPNVHGGRENLGAISLLQDTNEHVYDEYPEAIMLAEESTAWPGVTTPTEHGGLGFLYKWNMGWMHDTLEYASKEPVHRKHHHGDLTWTLSWAFSENYTLPLSHDEVVHGKNSLWSKMPGDDWQKAANLRLLYAHMFGHPGKKLLFMGGEFGQHREWDHDRALEWDLADEPLHEGLMEWLGDLNHLYQNAPALWNDQEDGFEWIAYDDRENSVLTYRRLNGDRSLVFVLNFTPVVREDYRIGATGDGRWHERLNSDSDVYGGSNVGNRGAVHSDPVEKHGHSHSLSLTLPPLGALVLEPAE.

Asp-306 functions as the Nucleophile in the catalytic mechanism. The Proton donor role is filled by Glu-358. Residues Tyr-581 to Leu-606 are disordered.

It belongs to the glycosyl hydrolase 13 family. GlgB subfamily. Monomer.

The catalysed reaction is Transfers a segment of a (1-&gt;4)-alpha-D-glucan chain to a primary hydroxy group in a similar glucan chain.. It participates in glycan biosynthesis; glycogen biosynthesis. Functionally, catalyzes the formation of the alpha-1,6-glucosidic linkages in glycogen by scission of a 1,4-alpha-linked oligosaccharide from growing alpha-1,4-glucan chains and the subsequent attachment of the oligosaccharide to the alpha-1,6 position. In Salinibacter ruber (strain DSM 13855 / M31), this protein is 1,4-alpha-glucan branching enzyme GlgB.